An 84-amino-acid polypeptide reads, in one-letter code: MIAVITTLLTYYMSSNNLITLLIAIEILLLTVTLKLIHISGYYDDIYGTIFSLIIIILAGAESAIGLSILVAYYRLRGTIGHSI.

A run of 2 helical transmembrane segments spans residues 19 to 39 (ITLL…LIHI) and 50 to 70 (IFSL…LSIL).

It belongs to the complex I subunit 4L family.

It is found in the mitochondrion membrane. It catalyses the reaction a ubiquinone + NADH + 5 H(+)(in) = a ubiquinol + NAD(+) + 4 H(+)(out). Its function is as follows. Core subunit of the mitochondrial membrane respiratory chain NADH dehydrogenase (Complex I) that is believed to belong to the minimal assembly required for catalysis. Complex I functions in the transfer of electrons from NADH to the respiratory chain. The immediate electron acceptor for the enzyme is believed to be ubiquinone. The sequence is that of NADH-ubiquinone oxidoreductase chain 4L (NAD4L) from Candida albicans (strain SC5314 / ATCC MYA-2876) (Yeast).